Reading from the N-terminus, the 737-residue chain is MAGRPEKCFSLIRFTLLCLKMVISSKTAPEIPTIDQAYSKISNSITVEWTTVPGATSYLLTAEDGNTIIETTVANSPGTVTGLKAATLYQITIRSISASGQSQASSPKQAKTVLAAPVLEVSSPSPDSILVSWDAVYMAIGFSVSVMRANGLGRIWKENTTNTSLTFSSLDAGTLYTIKAYAWNANGIPGDDSTRNQRTSPRAPANIQVFFDSGALKASVSWTPTEGAFNYTVVASSDSSQRSCSTTLSSCSISSLQCGTEYLISVSANNDAGSSKSCSAPTLKTVACAPGRVMIQEEPPGHLSVAWSNVELGDYYVAFVKSDDGLEVHCNTSLTQCNFLSECGFTYFISVFAYNKAGQSPLGDVFNYTTAPCCPNDISPVLVSSDRVEIAWSPVRGAELYETKAIAGYSIVECNDTAPACTLSALDCDTKYNVTVYSFSEVRGSNLSCSSHFITTAPCSPEIKNISKDAFSMINVHWRSTNEGATYTVTAQGKKGLFQCSSTGETCRMGGLPCGSMFSVTAVAETQAGKSLPSYSVPLETVPCCPAGLTAAQVTQSIINVSWTAGAVAQTYAAVLESYIGQSKCHTHQNHCLLGCITCGINYTVALKAISSTGLTADCAYQSYSSSVCCPLGVKLYRLGPNGIRIYWRASRGAANYSTDLYGSKGIFTCAPHAGLSFCDITNIPCGDVYTVMVSPVAETGLKLTFCPKKIYSVTCSGSTLGMVIYRGKRNDTASPR.

The first 25 residues, 1-25, serve as a signal peptide directing secretion; that stretch reads MAGRPEKCFSLIRFTLLCLKMVISS. 8 consecutive Fibronectin type-III domains span residues 28 to 115, 116 to 203, 204 to 288, 289 to 373, 374 to 459, 460 to 544, 545 to 633, and 631 to 715; these read APEI…TVLA, APVL…SPRA, PANI…TVAC, APGR…TAPC, CPND…TAPC, SPEI…TVPC, CPAG…CPLG, and PLGV…YSVT. N-linked (GlcNAc...) asparagine glycosylation is present at Asn-230. Asn-433 is a glycosylation site (N-linked (GlcNAc...) asparagine).

It localises to the secreted. This chain is Fibronectin type III domain-containing protein 7 (Fndc7), found in Mus musculus (Mouse).